Here is a 242-residue protein sequence, read N- to C-terminus: Ribonuclease PH (242 aa).

Phosphate-binding positions include Arg-87 and 125–127; that span reads STR.

It belongs to the RNase PH family. As to quaternary structure, homohexameric ring arranged as a trimer of dimers.

It catalyses the reaction tRNA(n+1) + phosphate = tRNA(n) + a ribonucleoside 5'-diphosphate. Phosphorolytic 3'-5' exoribonuclease that plays an important role in tRNA 3'-end maturation. Removes nucleotide residues following the 3'-CCA terminus of tRNAs; can also add nucleotides to the ends of RNA molecules by using nucleoside diphosphates as substrates, but this may not be physiologically important. Probably plays a role in initiation of 16S rRNA degradation (leading to ribosome degradation) during starvation. This Synechococcus sp. (strain JA-3-3Ab) (Cyanobacteria bacterium Yellowstone A-Prime) protein is Ribonuclease PH.